Consider the following 642-residue polypeptide: Probable serine/threonine-protein kinase drkA (642 aa).

The first 23 residues, 1–23 (MKKLPFLIIIIYIFLILISISSS), serve as a signal peptide directing secretion. The Extracellular segment spans residues 24-322 (IDYNYNNDID…KPTISLLKKY (299 aa)). The span at 106 to 128 (SENSGSGSNSNSNSKNTDSSTGP) shows a compositional bias: low complexity. Residues 106–136 (SENSGSGSNSNSNSKNTDSSTGPTPSPISIN) are disordered. Residues N136, N140, N158, N244, and N271 are each glycosylated (N-linked (GlcNAc...) asparagine). A helical membrane pass occupies residues 323–343 (LIIGFSIVGGLLIIGGCFLLI). Over 344-642 (RNRYRSSGYY…SDLQYVRQQL (299 aa)) the chain is Cytoplasmic. The region spanning 374–627 (IKIGVRIGKG…EQCLERLESI (254 aa)) is the Protein kinase domain. Residues 380–388 (IGKGNYGEV) and K401 contribute to the ATP site. D497 functions as the Proton acceptor in the catalytic mechanism.

Belongs to the protein kinase superfamily. TKL Ser/Thr protein kinase family.

Its subcellular location is the membrane. The catalysed reaction is L-seryl-[protein] + ATP = O-phospho-L-seryl-[protein] + ADP + H(+). It catalyses the reaction L-threonyl-[protein] + ATP = O-phospho-L-threonyl-[protein] + ADP + H(+). This Dictyostelium discoideum (Social amoeba) protein is Probable serine/threonine-protein kinase drkA (drkA).